The sequence spans 617 residues: RNA polymerase sigma factor RpoD (617 aa).

The interval 170 to 220 (PDDGSLPAEEVEPVNLKDDSADSKEKDDEEEESDDSSDSDDEGDGGPDPEE) is disordered. Over residues 184–195 (NLKDDSADSKEK) the composition is skewed to basic and acidic residues. The segment covering 196–218 (DDEEEESDDSSDSDDEGDGGPDP) has biased composition (acidic residues). The interval 383 to 453 (MVEANLRLVI…TRSIADQART (71 aa)) is sigma-70 factor domain-2. An Interaction with polymerase core subunit RpoC motif is present at residues 407 to 410 (DLIQ). Positions 462-538 (ETINKLNRIS…DSTMQSPIEM (77 aa)) are sigma-70 factor domain-3. The tract at residues 551–604 (VLAGLTAREAKVLRMRFGIDMNTDHTLEEVGKQFDVTRERIRQIEAKALRKLRH) is sigma-70 factor domain-4. Residues 577-596 (LEEVGKQFDVTRERIRQIEA) constitute a DNA-binding region (H-T-H motif).

The protein belongs to the sigma-70 factor family. RpoD/SigA subfamily. As to quaternary structure, interacts transiently with the RNA polymerase catalytic core.

It is found in the cytoplasm. Functionally, sigma factors are initiation factors that promote the attachment of RNA polymerase to specific initiation sites and are then released. This sigma factor is the primary sigma factor during exponential growth. In Pseudomonas aeruginosa (strain ATCC 15692 / DSM 22644 / CIP 104116 / JCM 14847 / LMG 12228 / 1C / PRS 101 / PAO1), this protein is RNA polymerase sigma factor RpoD.